The following is a 324-amino-acid chain: Heparan sulfate 2-O-sulfotransferase hst-2 (324 aa).

At M1 to R6 the chain is on the cytoplasmic side. A helical; Signal-anchor for type II membrane protein transmembrane segment spans residues K7–L24. Over K25–S324 the chain is Lumenal. N-linked (GlcNAc...) asparagine glycans are attached at residues N75 and N94. Catalysis depends on residues H107 and H109. N-linked (GlcNAc...) asparagine glycosylation occurs at N161. Intrachain disulfides connect C167-C175 and C188-C194.

Belongs to the sulfotransferase 3 family. Homotrimer. In terms of tissue distribution, present in the hypodermis, muscle, distal tip cells (DTCs) and in neurons (at protein level).

It is found in the golgi apparatus membrane. Its function is as follows. Catalyzes the transfer of sulfate to the C2-position of selected hexuronic acid residues within the maturing heparan sulfate (HS). Involved in cell adhesion and guidance by specifically modifying proteoglycans in the extracellular matrix and on the cell surface that are essential for axon migrations. In Caenorhabditis elegans, this protein is Heparan sulfate 2-O-sulfotransferase hst-2.